Here is a 538-residue protein sequence, read N- to C-terminus: CTP synthase (538 aa).

Residues 1–267 (MDRAKFIFVT…LTPIARRFNL (267 aa)) are amidoligase domain. S15 is a CTP binding site. S15 contributes to the UTP binding site. ATP contacts are provided by residues 16-21 (SLGKGI) and D73. 2 residues coordinate Mg(2+): D73 and E141. CTP is bound by residues 148 to 150 (DME), 188 to 193 (KTKPTQ), and K224. Residues 188–193 (KTKPTQ) and K224 each bind UTP. The 247-residue stretch at 292–538 (KIGFVGKYLS…DFIKSALSKS (247 aa)) folds into the Glutamine amidotransferase type-1 domain. Residue G351 coordinates L-glutamine. C378 serves as the catalytic Nucleophile; for glutamine hydrolysis. Residues 379 to 382 (LGMQ), E402, and R469 contribute to the L-glutamine site. Catalysis depends on residues H513 and E515.

The protein belongs to the CTP synthase family. Homotetramer.

It catalyses the reaction UTP + L-glutamine + ATP + H2O = CTP + L-glutamate + ADP + phosphate + 2 H(+). The catalysed reaction is L-glutamine + H2O = L-glutamate + NH4(+). It carries out the reaction UTP + NH4(+) + ATP = CTP + ADP + phosphate + 2 H(+). The protein operates within pyrimidine metabolism; CTP biosynthesis via de novo pathway; CTP from UDP: step 2/2. Its activity is regulated as follows. Allosterically activated by GTP, when glutamine is the substrate; GTP has no effect on the reaction when ammonia is the substrate. The allosteric effector GTP functions by stabilizing the protein conformation that binds the tetrahedral intermediate(s) formed during glutamine hydrolysis. Inhibited by the product CTP, via allosteric rather than competitive inhibition. Functionally, catalyzes the ATP-dependent amination of UTP to CTP with either L-glutamine or ammonia as the source of nitrogen. Regulates intracellular CTP levels through interactions with the four ribonucleotide triphosphates. The polypeptide is CTP synthase (Helicobacter pylori (strain HPAG1)).